The sequence spans 255 residues: Hydroxyacylglutathione hydrolase (255 aa).

His-56, His-58, Asp-60, His-61, His-114, Asp-133, and His-171 together coordinate Zn(2+).

Belongs to the metallo-beta-lactamase superfamily. Glyoxalase II family. As to quaternary structure, monomer. Requires Zn(2+) as cofactor.

The enzyme catalyses an S-(2-hydroxyacyl)glutathione + H2O = a 2-hydroxy carboxylate + glutathione + H(+). It participates in secondary metabolite metabolism; methylglyoxal degradation; (R)-lactate from methylglyoxal: step 2/2. Thiolesterase that catalyzes the hydrolysis of S-D-lactoyl-glutathione to form glutathione and D-lactic acid. This Cereibacter sphaeroides (strain ATCC 17025 / ATH 2.4.3) (Rhodobacter sphaeroides) protein is Hydroxyacylglutathione hydrolase.